The chain runs to 425 residues: Succinate--CoA ligase [ADP-forming] subunit beta, mitochondrial (425 aa).

A mitochondrion-targeting transit peptide spans 1 to 14 (NNHGLQIQQQQQRN). Residues 23 to 250 (MELLQEAGVS…SNSAYRQKKI (228 aa)) form the ATP-grasp domain. K40 carries the N6-acetyllysine modification. Residue Y46 is modified to Phosphotyrosine. Position 50 is an N6-acetyllysine; alternate (K50). K50 is modified (N6-succinyllysine; alternate). Residues K60 and 67–69 (GRG) each bind ATP. Residues K91, K101, K105, and K178 each carry the N6-acetyllysine modification. 2 residues coordinate Mg(2+): N220 and D234. Phosphoserine is present on S241. N285 contributes to the substrate binding site. T303 bears the Phosphothreonine mark. K330 is subject to N6-acetyllysine. Substrate is bound at residue 342–344 (GIM). Position 400 is an N6-acetyllysine (K400).

It belongs to the succinate/malate CoA ligase beta subunit family. ATP-specific subunit beta subfamily. As to quaternary structure, heterodimer of an alpha and a beta subunit. The beta subunit determines specificity for ATP. Interacts with ALAS2. The cofactor is Mg(2+).

The protein resides in the mitochondrion. It carries out the reaction succinate + ATP + CoA = succinyl-CoA + ADP + phosphate. It participates in carbohydrate metabolism; tricarboxylic acid cycle; succinate from succinyl-CoA (ligase route): step 1/1. Its function is as follows. ATP-specific succinyl-CoA synthetase functions in the citric acid cycle (TCA), coupling the hydrolysis of succinyl-CoA to the synthesis of ATP and thus represents the only step of substrate-level phosphorylation in the TCA. The beta subunit provides nucleotide specificity of the enzyme and binds the substrate succinate, while the binding sites for coenzyme A and phosphate are found in the alpha subunit. This is Succinate--CoA ligase [ADP-forming] subunit beta, mitochondrial from Sus scrofa (Pig).